The sequence spans 251 residues: MSDALPMSPAEFEQALRAKGAYYHIHHPYHVAMYQGRATREQIQGWVANRFYYQVNIPMKDAAILANCPDREVRREWIQRLLDHDGAPGEDGGIEAWLRLGQAVGLDPDQLRSQELVLPGVRFAVDAYVNFARRASWQEAASSSLTELFAPQIHQSRLDSWPQHYPWIDPAGYEYFRTRLGQARRDVEHGLAITLQHYTTRAGQERMLEILQFKLDILWSMLDAMSMAYELNRPPYHSVTQDRVWHKGITL.

This sequence belongs to the PqqC family.

It catalyses the reaction 6-(2-amino-2-carboxyethyl)-7,8-dioxo-1,2,3,4,7,8-hexahydroquinoline-2,4-dicarboxylate + 3 O2 = pyrroloquinoline quinone + 2 H2O2 + 2 H2O + H(+). It participates in cofactor biosynthesis; pyrroloquinoline quinone biosynthesis. Functionally, ring cyclization and eight-electron oxidation of 3a-(2-amino-2-carboxyethyl)-4,5-dioxo-4,5,6,7,8,9-hexahydroquinoline-7,9-dicarboxylic-acid to PQQ. This Pseudomonas putida (strain GB-1) protein is Pyrroloquinoline-quinone synthase.